The chain runs to 273 residues: Putative phosphoenolpyruvate synthase regulatory protein (273 aa).

Residue G153 to T160 coordinates ADP.

This sequence belongs to the pyruvate, phosphate/water dikinase regulatory protein family. PSRP subfamily.

It catalyses the reaction [pyruvate, water dikinase] + ADP = [pyruvate, water dikinase]-phosphate + AMP + H(+). The enzyme catalyses [pyruvate, water dikinase]-phosphate + phosphate + H(+) = [pyruvate, water dikinase] + diphosphate. Its function is as follows. Bifunctional serine/threonine kinase and phosphorylase involved in the regulation of the phosphoenolpyruvate synthase (PEPS) by catalyzing its phosphorylation/dephosphorylation. This is Putative phosphoenolpyruvate synthase regulatory protein from Verminephrobacter eiseniae (strain EF01-2).